The chain runs to 330 residues: Carbonic anhydrase (330 aa).

A chloroplast transit peptide-like region spans residues 1 to 109; sequence MSTASAFATN…AAARIDQITA (109 aa).

It belongs to the beta-class carbonic anhydrase family.

It is found in the cytoplasm. It carries out the reaction hydrogencarbonate + H(+) = CO2 + H2O. Its function is as follows. Reversible hydration of carbon dioxide. This Flaveria brownii (Brown's yellowtops) protein is Carbonic anhydrase.